The sequence spans 257 residues: Putative pentatricopeptide repeat-containing protein At1g43010 (257 aa).

PPR repeat units follow at residues 133 to 168 and 169 to 203; these read KMRD…GFLL and KPYL…NMEV.

It belongs to the PPR family. P subfamily.

The sequence is that of Putative pentatricopeptide repeat-containing protein At1g43010 from Arabidopsis thaliana (Mouse-ear cress).